Consider the following 504-residue polypeptide: L-carnitine/gamma-butyrobetaine antiporter (504 aa).

The next 12 membrane-spanning stretches (helical) occupy residues 10–30 (IEPKVFFPPLIIVGILCWLTV), 51–71 (WGWAFEWYMVVMLFGWFWLVF), 92–112 (IFMMFASCTSAAVLFWGSIEI), 143–163 (GPLPWATYSFLSVAFAYFFFV), 195–215 (FYLVALIFAMGTSLGLATPLV), 231–251 (LDAIIITCWIILNAICVACGL), 263–283 (SYLSFLMLGWVFIVSGASFIM), 316–336 (WTVFYWAWWVIYAIQMSIFLA), 347–367 (LCFGMVLGLTASTWILWTVLG), 398–418 (WAALPLSTATMWGFFILCFIA), 446–466 (LLVRIGWSVLVGIIGIVLLAL), and 475–495 (AIIAGGCPLFFVNIMVTLSFI).

It belongs to the BCCT transporter (TC 2.A.15) family. CaiT subfamily. Homotrimer.

Its subcellular location is the cell inner membrane. It carries out the reaction 4-(trimethylamino)butanoate(in) + (R)-carnitine(out) = 4-(trimethylamino)butanoate(out) + (R)-carnitine(in). It functions in the pathway amine and polyamine metabolism; carnitine metabolism. In terms of biological role, catalyzes the exchange of L-carnitine for gamma-butyrobetaine. The chain is L-carnitine/gamma-butyrobetaine antiporter from Escherichia coli O6:K15:H31 (strain 536 / UPEC).